The chain runs to 266 residues: MKAKKYYGQNFISDLNLINRIVDVLDQNKNQLIIEIGPGKGALTKELVKRFDKVVVIEIDQDMVEILKAKFDHSNLEIIQADVLEIDLKQLISKYDYEKISIISNTPYYITSEILFKTLQISDLLTKAVFMLQKEVALRICSNKNENNYNNLSIACQFYSQRNFEFVVNKKMFYPIPKVDSAIISLTFNDIYKKQINDDKKFIEFVRILFNNKRKTILNNLNNIIQNKNKALEYLNTLNISSNLRPEQLDIDEYIKLFNLVYTSNF.

S-adenosyl-L-methionine contacts are provided by asparagine 10, isoleucine 12, glycine 37, glutamate 58, aspartate 82, and asparagine 105.

The protein belongs to the class I-like SAM-binding methyltransferase superfamily. rRNA adenine N(6)-methyltransferase family. RsmA subfamily.

The protein localises to the cytoplasm. The catalysed reaction is adenosine(1518)/adenosine(1519) in 16S rRNA + 4 S-adenosyl-L-methionine = N(6)-dimethyladenosine(1518)/N(6)-dimethyladenosine(1519) in 16S rRNA + 4 S-adenosyl-L-homocysteine + 4 H(+). Functionally, specifically dimethylates two adjacent adenosines (A1518 and A1519) in the loop of a conserved hairpin near the 3'-end of 16S rRNA in the 30S particle. May play a critical role in biogenesis of 30S subunits. This is Ribosomal RNA small subunit methyltransferase A from Mycoplasma mycoides subsp. mycoides SC (strain CCUG 32753 / NCTC 10114 / PG1).